A 23-amino-acid polypeptide reads, in one-letter code: Paralytic peptide 1 (23 aa).

Cysteine 7 and cysteine 19 form a disulfide bridge.

It belongs to the GBP/PSP1/paralytic peptide family. As to expression, hemolymph.

Functionally, causes rapid, rigid paralysis when injected into Lepidopteran larvae. The physiological role may be to reduce hemolymph loss following injury and promote wound healing. This Manduca sexta (Tobacco hawkmoth) protein is Paralytic peptide 1.